The following is a 117-amino-acid chain: Prefoldin subunit beta (117 aa).

It belongs to the prefoldin subunit beta family. In terms of assembly, heterohexamer of two alpha and four beta subunits.

It localises to the cytoplasm. Functionally, molecular chaperone capable of stabilizing a range of proteins. Seems to fulfill an ATP-independent, HSP70-like function in archaeal de novo protein folding. This Thermococcus kodakarensis (strain ATCC BAA-918 / JCM 12380 / KOD1) (Pyrococcus kodakaraensis (strain KOD1)) protein is Prefoldin subunit beta.